The primary structure comprises 335 residues: Tryptophan--tRNA ligase (335 aa).

ATP contacts are provided by residues 19–21 and 28–29; these read QPS and GN. The 'HIGH' region signature appears at 20 to 29; it reads PSSGMLHLGN. An L-tryptophan-binding site is contributed by D143. Residues 155-157, I192, and 201-205 contribute to the ATP site; these read GAD and KMSKS. Positions 201–205 match the 'KMSKS' region motif; the sequence is KMSKS.

It belongs to the class-I aminoacyl-tRNA synthetase family. In terms of assembly, homodimer.

The protein localises to the cytoplasm. The catalysed reaction is tRNA(Trp) + L-tryptophan + ATP = L-tryptophyl-tRNA(Trp) + AMP + diphosphate + H(+). In terms of biological role, catalyzes the attachment of tryptophan to tRNA(Trp). The polypeptide is Tryptophan--tRNA ligase (Tropheryma whipplei (strain Twist) (Whipple's bacillus)).